The sequence spans 794 residues: MRVDYDVAAALRHEGLKPHDYDEICRRLQRAPNRVELGMFGVMWSEHCCYRNSRPLLSSFPTSGHRILVGPGENAGVVDLGDGQSLAFKIESHNHPSALEPFQGAATGVGGILRDIFTMGARPIALLNALRFGPLEDERNVGLMEGVVEGIAHYGNCVGVPTVGGEVAFDSSYSGNPLVNAMALGLMETDEIVCSGAHGVGYPVIYVGSTTGRDGMGGASFASAELTKASLDDRPAVQVGDPFLEKGLIEACLEAFKSGDVVAAQDMGAAGLTCSCSEMAAKGGLGIELDLDRVPARELGMTPYEFLLSESQERMLFVVKPGQEQSLMERFIRWGLQAAIVGCVLEEKVVRVLQKGEVVAEVPANALADDTPIDRHELVSDPPLEIQAKWDWQENLLPVVGLKGINLNSQSHFGSNISWDEILLKLLDDPTIASKRWVYRQYDHQVQANTVSAPGVSDAAVVRLRPQQGKGSVDEVKRGVAAVVDCPNRWVFLDPERGAMAAVAEAARNLSCVGAEPLAVTDNLNFPSPETPTGYWQLALACRGLSKACKTFSTPVTGGNVSLYNETRLADGKIQPIHPTPVVGMVGLVHNLVNVCGQAWLEPGDLIWLLGVPIDTTVAVDPRVSLAGSSYLECIHGLVTGRPPEIDLKLECLVQSFLRNSITEGFVRSAHDLSDGGLAVAVAECCIAANLGAHIELPSSDARLDRLLFAEGGSRILVSVPSTQAVAWQKVLNQAKTTAPGSVFDQYLGVVTADDELLITQAGNRLVQLPLNQLRECFEQAIPRRMGLDLSSSV.

His-47 is a catalytic residue. ATP contacts are provided by Tyr-50 and Lys-89. A Mg(2+)-binding site is contributed by Glu-91. Substrate is bound by residues 92–95 (SHNH) and Arg-114. His-93 acts as the Proton acceptor in catalysis. Asp-115 provides a ligand contact to Mg(2+). Residue Gln-238 coordinates substrate. Asp-266 contacts Mg(2+). Position 310-312 (310-312 (ESQ)) interacts with substrate. ATP is bound by residues Asp-522 and Gly-559. Asn-560 provides a ligand contact to Mg(2+). Ser-562 provides a ligand contact to substrate.

The protein belongs to the FGAMS family. As to quaternary structure, monomer. Part of the FGAM synthase complex composed of 1 PurL, 1 PurQ and 2 PurS subunits.

The protein localises to the cytoplasm. It carries out the reaction N(2)-formyl-N(1)-(5-phospho-beta-D-ribosyl)glycinamide + L-glutamine + ATP + H2O = 2-formamido-N(1)-(5-O-phospho-beta-D-ribosyl)acetamidine + L-glutamate + ADP + phosphate + H(+). Its pathway is purine metabolism; IMP biosynthesis via de novo pathway; 5-amino-1-(5-phospho-D-ribosyl)imidazole from N(2)-formyl-N(1)-(5-phospho-D-ribosyl)glycinamide: step 1/2. Part of the phosphoribosylformylglycinamidine synthase complex involved in the purines biosynthetic pathway. Catalyzes the ATP-dependent conversion of formylglycinamide ribonucleotide (FGAR) and glutamine to yield formylglycinamidine ribonucleotide (FGAM) and glutamate. The FGAM synthase complex is composed of three subunits. PurQ produces an ammonia molecule by converting glutamine to glutamate. PurL transfers the ammonia molecule to FGAR to form FGAM in an ATP-dependent manner. PurS interacts with PurQ and PurL and is thought to assist in the transfer of the ammonia molecule from PurQ to PurL. In Prochlorococcus marinus (strain MIT 9313), this protein is Phosphoribosylformylglycinamidine synthase subunit PurL.